A 98-amino-acid polypeptide reads, in one-letter code: MAAINRDDVAHLARLAHIEMSAEELDRMAVELAVIVDSVKSVSEAAGEDVPATSHPIPLTNVFREDVVGHTFTAEQALSGAPDSYENRFKVPAILDED.

It belongs to the GatC family. Heterotrimer of A, B and C subunits.

It carries out the reaction L-glutamyl-tRNA(Gln) + L-glutamine + ATP + H2O = L-glutaminyl-tRNA(Gln) + L-glutamate + ADP + phosphate + H(+). The catalysed reaction is L-aspartyl-tRNA(Asn) + L-glutamine + ATP + H2O = L-asparaginyl-tRNA(Asn) + L-glutamate + ADP + phosphate + 2 H(+). Its function is as follows. Allows the formation of correctly charged Asn-tRNA(Asn) or Gln-tRNA(Gln) through the transamidation of misacylated Asp-tRNA(Asn) or Glu-tRNA(Gln) in organisms which lack either or both of asparaginyl-tRNA or glutaminyl-tRNA synthetases. The reaction takes place in the presence of glutamine and ATP through an activated phospho-Asp-tRNA(Asn) or phospho-Glu-tRNA(Gln). This is Aspartyl/glutamyl-tRNA(Asn/Gln) amidotransferase subunit C from Paenarthrobacter aurescens (strain TC1).